The sequence spans 378 residues: Dihydroorotate dehydrogenase (quinone) (378 aa).

FMN contacts are provided by residues 77–81 (AGFDK) and threonine 101. Lysine 81 is a substrate binding site. Residue 126-130 (NRMGF) coordinates substrate. Residues asparagine 158 and asparagine 191 each coordinate FMN. Substrate is bound at residue asparagine 191. The Nucleophile role is filled by serine 194. Residue asparagine 196 coordinates substrate. FMN-binding residues include lysine 229 and threonine 257. 258 to 259 (NT) contacts substrate. Residues glycine 287, glycine 316, and 337–338 (YT) contribute to the FMN site.

It belongs to the dihydroorotate dehydrogenase family. Type 2 subfamily. Monomer. It depends on FMN as a cofactor.

Its subcellular location is the cell membrane. It carries out the reaction (S)-dihydroorotate + a quinone = orotate + a quinol. It participates in pyrimidine metabolism; UMP biosynthesis via de novo pathway; orotate from (S)-dihydroorotate (quinone route): step 1/1. Functionally, catalyzes the conversion of dihydroorotate to orotate with quinone as electron acceptor. This chain is Dihydroorotate dehydrogenase (quinone), found in Synechococcus elongatus (strain ATCC 33912 / PCC 7942 / FACHB-805) (Anacystis nidulans R2).